A 238-amino-acid polypeptide reads, in one-letter code: Ribonuclease PH (238 aa).

Phosphate-binding positions include R86 and 124–126 (GTR).

It belongs to the RNase PH family. Homohexameric ring arranged as a trimer of dimers.

The catalysed reaction is tRNA(n+1) + phosphate = tRNA(n) + a ribonucleoside 5'-diphosphate. Phosphorolytic 3'-5' exoribonuclease that plays an important role in tRNA 3'-end maturation. Removes nucleotide residues following the 3'-CCA terminus of tRNAs; can also add nucleotides to the ends of RNA molecules by using nucleoside diphosphates as substrates, but this may not be physiologically important. Probably plays a role in initiation of 16S rRNA degradation (leading to ribosome degradation) during starvation. The sequence is that of Ribonuclease PH from Haemophilus ducreyi (strain 35000HP / ATCC 700724).